Consider the following 350-residue polypeptide: Histidinol-phosphate aminotransferase (350 aa).

Lysine 220 bears the N6-(pyridoxal phosphate)lysine mark.

Belongs to the class-II pyridoxal-phosphate-dependent aminotransferase family. Histidinol-phosphate aminotransferase subfamily. Homodimer. The cofactor is pyridoxal 5'-phosphate.

It catalyses the reaction L-histidinol phosphate + 2-oxoglutarate = 3-(imidazol-4-yl)-2-oxopropyl phosphate + L-glutamate. It participates in amino-acid biosynthesis; L-histidine biosynthesis; L-histidine from 5-phospho-alpha-D-ribose 1-diphosphate: step 7/9. The sequence is that of Histidinol-phosphate aminotransferase from Macrococcus caseolyticus (strain JCSC5402) (Macrococcoides caseolyticum).